The following is a 124-amino-acid chain: Large ribosomal subunit protein bL12 (124 aa).

Belongs to the bacterial ribosomal protein bL12 family. Homodimer. Part of the ribosomal stalk of the 50S ribosomal subunit. Forms a multimeric L10(L12)X complex, where L10 forms an elongated spine to which 2 to 4 L12 dimers bind in a sequential fashion. Binds GTP-bound translation factors.

Its function is as follows. Forms part of the ribosomal stalk which helps the ribosome interact with GTP-bound translation factors. Is thus essential for accurate translation. The polypeptide is Large ribosomal subunit protein bL12 (Nautilia profundicola (strain ATCC BAA-1463 / DSM 18972 / AmH)).